The primary structure comprises 219 residues: Ribonuclease HII (219 aa).

The 190-residue stretch at 30 to 219 (RVIAGIDEAG…VREHVTCPSS (190 aa)) folds into the RNase H type-2 domain. A divalent metal cation-binding residues include D36, E37, and D128.

It belongs to the RNase HII family. The cofactor is Mn(2+). Mg(2+) is required as a cofactor.

It is found in the cytoplasm. It catalyses the reaction Endonucleolytic cleavage to 5'-phosphomonoester.. In terms of biological role, endonuclease that specifically degrades the RNA of RNA-DNA hybrids. The polypeptide is Ribonuclease HII (Pelobacter propionicus (strain DSM 2379 / NBRC 103807 / OttBd1)).